A 579-amino-acid chain; its full sequence is Nif-specific regulatory protein (579 aa).

A GAF domain is found at 40–187 (DPVAEVPQIF…MVASLLEQAL (148 aa)). In terms of domain architecture, Sigma-54 factor interaction spans 226–454 (IVGSSPAIAE…LENCVNRAAA (229 aa)). ATP-binding positions include 254–261 (GESGTGKE) and 317–326 (ADGGTLFLDE). An inter-domain linker region spans residues 464-536 (EELACRQGAC…PLRTKTAQLS (73 aa)). The a divalent metal cation site is built by Cys-468 and Cys-473. Residues 502 to 529 (RVSAPPPEPAPAPEPAPEAPPREEVPLR) are disordered. Tandem repeats lie at residues 505–506 (AP), 507–508 (PP), 509–510 (EP), 511–512 (AP), 513–514 (AP), 515–516 (EP), and 517–518 (AP). A 7 X 2 AA tandem repeats of X-P region spans residues 505 to 518 (APPPEPAPAPEPAP). The segment covering 505-520 (APPPEPAPAPEPAPEA) has biased composition (pro residues). Residues 537 to 579 (REELLRALESAGWVQAKAARLLGMTPRQIAYALQKFEIELRKI) form a C-terminal DNA-binding domain region. A DNA-binding region (H-T-H motif) is located at residues 551-570 (QAKAARLLGMTPRQIAYALQ).

Interacts with sigma-54.

Required for activation of most nif operons, which are directly involved in nitrogen fixation. This chain is Nif-specific regulatory protein (nifA1), found in Rhodobacter capsulatus (Rhodopseudomonas capsulata).